The chain runs to 232 residues: Nuclear transcription factor Y subunit nfyc-1 (232 aa).

A disordered region spans residues Thr191–Asn232. Polar residues predominate over residues Arg220 to Asn232.

It belongs to the NFYC/HAP5 subunit family. As to quaternary structure, forms two NF-Y heterotrimeric transcription factor complexes: the nfya-1-NF-Y complex is composed of nfya-1, nfyb-1 and nfyc-1, and the nfya-2-NF-Y complex is composed of nfya-2, nfyb-1 and nfyc-1. Interacts with nfyb-1; the interaction is direct and is required for the interaction with either nfya-1 or nfya-2, and subsequent binding of the complex to the 5'-CCAAT-3' box motif in DNA. As to expression, expressed in certain parts of the gonads with high expression in fertilized oocytes in the uterus and mature oocytes from the distal to the proximal arm of the gonad, but weak expression in the syncytial ovaries and immature oocytes at the beginning of the proximal arm of the gonad. Expressed in the excretory cell, secretory cells in the pharyngeal terminal bulb wall, in the small ganglia surrounding the pharynx and in the neurons running anteriorly to the sensory organs in the head. Not expressed in the intestine, the hypodermis or body wall muscle surrounding the pseudocoelomic space.

The protein resides in the nucleus. Its subcellular location is the cytoplasm. It is found in the perikaryon. Component of sequence-specific heterotrimeric transcription factor (nfya-1-NF-Y and nfya-2-NF-Y) complexes which specifically recognize a 5'-CCAAT-3' box motif found in the promoters of its target genes to regulate their expression and control cellular identity in particular tissue types. In association with the components in the NF-Y complexes, represses the expression of the T-box transcription factor tbx-2 throughout larval development, which most likely restricts its expression to certain tissues. May act to repress txb-2 expression in conjunction with tbx-2 itself, which has an autoregulatory role. In association with the components in the nfya-1-NF-Y complex, negatively regulates the expression of the homeobox protein egl-5 to spatially restrict its expression in tissues such as the head. May regulate egl-5 expression in association with the mes-2-mes-3-mes-6 complex. The chain is Nuclear transcription factor Y subunit nfyc-1 from Caenorhabditis elegans.